The primary structure comprises 195 residues: Thymidylate kinase (195 aa).

7–14 (GIDGVGKS) lines the ATP pocket.

The protein belongs to the thymidylate kinase family.

It catalyses the reaction dTMP + ATP = dTDP + ADP. Its function is as follows. Phosphorylation of dTMP to form dTDP in both de novo and salvage pathways of dTTP synthesis. This Campylobacter concisus (strain 13826) protein is Thymidylate kinase.